Consider the following 54-residue polypeptide: Light-harvesting protein B-880 beta chain (54 aa).

Residues 1–20 lie on the Cytoplasmic side of the membrane; the sequence is AEDRSSLSGVSDAEAKEFHA. A bacteriochlorophyll-binding residues include histidine 19 and histidine 37. Residues 21–43 traverse the membrane as a helical segment; it reads LFVSSFMGFMVVAVLAHVLAWAW. Residues 44 to 54 lie on the Periplasmic side of the membrane; it reads RPWIPGPKGWA.

The protein belongs to the antenna complex beta subunit family. The core complex is formed by different alpha and beta chains, binding bacteriochlorophyll molecules, and arranged most probably in tetrameric structures disposed around the reaction center. The non-pigmented gamma chains may constitute additional components.

Its subcellular location is the cell inner membrane. Its function is as follows. Antenna complexes are light-harvesting systems, which transfer the excitation energy to the reaction centers. The chain is Light-harvesting protein B-880 beta chain from Rhodoblastus acidophilus (Rhodopseudomonas acidophila).